Reading from the N-terminus, the 235-residue chain is Protein CIST1 (235 aa).

Residues 1–31 (MASSQPPLPPPPPPLLLLALLLLLKVSDTSS) form the signal peptide. Low complexity-rich tracts occupy residues 28–61 (DTSS…SSPT) and 76–110 (STSH…SQPE). The tract at residues 28–159 (DTSSSVSTAT…TGPPSVSLAT (132 aa)) is disordered. Over 32–184 (SVSTATSTAS…GVPRLHRNPG (153 aa)) the chain is Extracellular. N-linked (GlcNAc...) asparagine glycosylation is present at Asn-45. Over residues 114–136 (HPSSGSPSSEHTVTSPSLGSVSL) the composition is skewed to polar residues. Residues 185-205 (VVVAVCLLVSALLIGGAIMAV) form a helical membrane-spanning segment. The Cytoplasmic portion of the chain corresponds to 206-235 (RRCHNGVSEFQKLDEGLVSRRSSSAHHTLP).

As to expression, highly expressed in large intestine, small intestine, rumen, and kidney tissues.

The protein localises to the membrane. This Bos taurus (Bovine) protein is Protein CIST1 (CIST1).